Reading from the N-terminus, the 175-residue chain is Pycsar effector protein RsPycTM (175 aa).

The next 3 membrane-spanning stretches (helical) occupy residues A17–L37, P44–I64, and A146–I166.

Its subcellular location is the cell inner membrane. Pycsar (pyrimidine cyclase system for antiphage resistance) provides immunity against bacteriophage. The pyrimidine cyclase (PycC) synthesizes cyclic nucleotides in response to infection; these serve as specific second messenger signals. The signals activate the nearby effector, leading to bacterial cell death and abortive phage infection. A clade A Pycsar system. In terms of biological role, the effector gene of a two-gene Pycsar system. Expression of this and uridylate cyclase RsPycC (AC A0A4R2TZQ0) probably confers resistance to bacteriophage. The genes are probably only expressed in response to bacteriophage infection. Probably only responds to cUMP (produced by its cognate NTP cyclase), acts by impairing membrane integrity. The chain is Pycsar effector protein RsPycTM from Rhizobium sp. (strain PP-F2F-G36).